The following is a 238-amino-acid chain: Aspartate/glutamate leucyltransferase (238 aa).

This sequence belongs to the R-transferase family. Bpt subfamily.

The protein localises to the cytoplasm. The enzyme catalyses N-terminal L-glutamyl-[protein] + L-leucyl-tRNA(Leu) = N-terminal L-leucyl-L-glutamyl-[protein] + tRNA(Leu) + H(+). It catalyses the reaction N-terminal L-aspartyl-[protein] + L-leucyl-tRNA(Leu) = N-terminal L-leucyl-L-aspartyl-[protein] + tRNA(Leu) + H(+). Its function is as follows. Functions in the N-end rule pathway of protein degradation where it conjugates Leu from its aminoacyl-tRNA to the N-termini of proteins containing an N-terminal aspartate or glutamate. This chain is Aspartate/glutamate leucyltransferase, found in Shewanella sp. (strain MR-4).